The following is a 340-amino-acid chain: Glyceraldehyde-3-phosphate dehydrogenase (340 aa).

Residues 11-12 (TI) and Gly109 each bind NAD(+). 138–140 (SCN) is a binding site for D-glyceraldehyde 3-phosphate. Cys139 (nucleophile) is an active-site residue. Arg167 provides a ligand contact to NAD(+). Position 193 to 194 (193 to 194 (HA)) interacts with D-glyceraldehyde 3-phosphate. Gln300 provides a ligand contact to NAD(+).

This sequence belongs to the glyceraldehyde-3-phosphate dehydrogenase family. In terms of assembly, homotetramer.

The protein resides in the cytoplasm. The enzyme catalyses D-glyceraldehyde 3-phosphate + phosphate + NADP(+) = (2R)-3-phospho-glyceroyl phosphate + NADPH + H(+). The catalysed reaction is D-glyceraldehyde 3-phosphate + phosphate + NAD(+) = (2R)-3-phospho-glyceroyl phosphate + NADH + H(+). The protein operates within carbohydrate degradation; glycolysis; pyruvate from D-glyceraldehyde 3-phosphate: step 1/5. The sequence is that of Glyceraldehyde-3-phosphate dehydrogenase from Saccharolobus islandicus (strain Y.N.15.51 / Yellowstone #2) (Sulfolobus islandicus).